Reading from the N-terminus, the 400-residue chain is Argininosuccinate synthase (400 aa).

An ATP-binding site is contributed by 8–16 (AYSGGLDTS). The L-citrulline site is built by Tyr87 and Ser92. Gly117 is a binding site for ATP. L-aspartate is bound by residues Thr119, Asn123, and Asp124. L-citrulline is bound at residue Asn123. Positions 127, 175, 259, and 271 each coordinate L-citrulline.

Belongs to the argininosuccinate synthase family. Type 1 subfamily. In terms of assembly, homotetramer.

The protein localises to the cytoplasm. It catalyses the reaction L-citrulline + L-aspartate + ATP = 2-(N(omega)-L-arginino)succinate + AMP + diphosphate + H(+). It functions in the pathway amino-acid biosynthesis; L-arginine biosynthesis; L-arginine from L-ornithine and carbamoyl phosphate: step 2/3. In Frankia alni (strain DSM 45986 / CECT 9034 / ACN14a), this protein is Argininosuccinate synthase.